We begin with the raw amino-acid sequence, 624 residues long: Multicopper oxidase elcG (624 aa).

Positions methionine 1–threonine 18 are cleaved as a signal peptide. 2 consecutive Plastocyanin-like domains span residues proline 48–glycine 160 and cysteine 216–isoleucine 373. N-linked (GlcNAc...) asparagine glycosylation is present at asparagine 65. Cu cation-binding residues include histidine 96, histidine 98, histidine 140, and histidine 142. Residues asparagine 271, asparagine 296, and asparagine 464 are each glycosylated (N-linked (GlcNAc...) asparagine). The Plastocyanin-like 3 domain maps to phenylalanine 474–glycine 603. Histidine 511, histidine 514, histidine 516, histidine 585, cysteine 586, histidine 587, and histidine 591 together coordinate Cu cation.

This sequence belongs to the multicopper oxidase family.

Its pathway is secondary metabolite biosynthesis. In terms of biological role, multicopper oxidase; part of the gene cluster that mediates the biosynthesis of elsinochrome C, a perelyenequinone phytotoxin structurally similar to cercosporin. The first step of elsinochrome C biosynthesis is performed by the polyketide synthase elcA which catalyzes the formation of nor-toralactone. The starter unit acyltransferase (SAT) domain of elcA initiates polyketide extension by the selective utilization of acetyl-CoA, which is elongated to the heptaketide in the beta-ketoacyl synthase (KS) domain by successive condensations with six malonyl units introduced by the malonyl acyltransferase (MAT) domain. The product template (PT) domain catalyzes C4-C9 and C2-C11 aldol cyclizations and dehydrations to a trihydroxynaphthalene, which is thought to be delivered to the thioesterase (TE) domain for product release. The bifunctional enzyme elcB then methylates nor-toralactone to toralactone before conducting an unusual oxidative aromatic ring opening. The next step in perylenequinone biosynthesis is an O-methylation at the nascent OH-6 of the elcB product performed by the O-methyltransferase elcD. The oxidative coupling of the two monomeric naphthol units in perylenequinone biosynthesis is catalyzed by the FAD-dependent monooxygenase elcE and the multicopper oxidase elcG. ElcG might catalyze the first intermolecular coupling in a regio- and stereo-selective manner via a phenol radical coupling mechanism and the elcE could forge the second C-C bond intramolecularly via a hydride transfer mechanism. The fasciclin domain-containing protein elcF might also play a role duting this step. The last piece of the puzzle in the biosynthesis of elsinochrome C is the additional annulation by enolate coupling to afford the dihydrobenzo(ghi)perylenequinone system, catalyzed by the FAD-dependent monooxygenase elcH. The chain is Multicopper oxidase elcG from Phaeosphaeria nodorum (strain SN15 / ATCC MYA-4574 / FGSC 10173) (Glume blotch fungus).